The following is a 538-amino-acid chain: NADH-quinone oxidoreductase subunit N (538 aa).

The next 14 membrane-spanning stretches (helical) occupy residues Leu-28 to Val-48, Gln-57 to Ala-77, Pro-94 to Ala-114, His-147 to Ala-167, Leu-170 to Met-190, Phe-206 to Cys-226, Ile-249 to Phe-269, Met-288 to Leu-308, Trp-315 to Leu-335, Leu-343 to Trp-363, Val-380 to Met-400, Ile-424 to Phe-444, Gly-458 to Leu-478, and Ile-503 to Pro-523.

This sequence belongs to the complex I subunit 2 family. As to quaternary structure, NDH-1 is composed of 14 different subunits. Subunits NuoA, H, J, K, L, M, N constitute the membrane sector of the complex.

Its subcellular location is the cell membrane. The enzyme catalyses a quinone + NADH + 5 H(+)(in) = a quinol + NAD(+) + 4 H(+)(out). Functionally, NDH-1 shuttles electrons from NADH, via FMN and iron-sulfur (Fe-S) centers, to quinones in the respiratory chain. The immediate electron acceptor for the enzyme in this species is believed to be a menaquinone. Couples the redox reaction to proton translocation (for every two electrons transferred, four hydrogen ions are translocated across the cytoplasmic membrane), and thus conserves the redox energy in a proton gradient. The chain is NADH-quinone oxidoreductase subunit N from Cutibacterium acnes (strain DSM 16379 / KPA171202) (Propionibacterium acnes).